Reading from the N-terminus, the 243-residue chain is MARRPRAESSKEGPAHLLELVRSAVPPVHSAGHPFISAGLAVTSAGAVGQVVTGRDLRWLRRVGLLAASACAVFFRHPSRVPPTRAGVVVAPADGMICVIDSATPPAELSMGNMSLPRVSIFLSLLDVHVQRAPISGEVIAVQYQPGRFGAADLAPASTENERTSVRIRTAGGTEVVVVQIAGLLARRIVCYAHIGDKLTIGDTYGLIRFGSRLDTYLPPGTEPVVQVGQRAVAGETVLADLT.

The active-site Schiff-base intermediate with substrate; via pyruvic acid is the Ser212. Ser212 bears the Pyruvic acid (Ser); by autocatalysis mark.

Belongs to the phosphatidylserine decarboxylase family. PSD-A subfamily. As to quaternary structure, heterodimer of a large membrane-associated beta subunit and a small pyruvoyl-containing alpha subunit. Requires pyruvate as cofactor. Is synthesized initially as an inactive proenzyme. Formation of the active enzyme involves a self-maturation process in which the active site pyruvoyl group is generated from an internal serine residue via an autocatalytic post-translational modification. Two non-identical subunits are generated from the proenzyme in this reaction, and the pyruvate is formed at the N-terminus of the alpha chain, which is derived from the carboxyl end of the proenzyme. The post-translation cleavage follows an unusual pathway, termed non-hydrolytic serinolysis, in which the side chain hydroxyl group of the serine supplies its oxygen atom to form the C-terminus of the beta chain, while the remainder of the serine residue undergoes an oxidative deamination to produce ammonia and the pyruvoyl prosthetic group on the alpha chain.

It localises to the cell membrane. It carries out the reaction a 1,2-diacyl-sn-glycero-3-phospho-L-serine + H(+) = a 1,2-diacyl-sn-glycero-3-phosphoethanolamine + CO2. It functions in the pathway phospholipid metabolism; phosphatidylethanolamine biosynthesis; phosphatidylethanolamine from CDP-diacylglycerol: step 2/2. In terms of biological role, catalyzes the formation of phosphatidylethanolamine (PtdEtn) from phosphatidylserine (PtdSer). The chain is Phosphatidylserine decarboxylase proenzyme from Mycobacterium leprae (strain Br4923).